We begin with the raw amino-acid sequence, 258 residues long: Deoxyribose-phosphate aldolase (258 aa).

Asp-102 functions as the Proton donor/acceptor in the catalytic mechanism. The Schiff-base intermediate with acetaldehyde role is filled by Lys-165. The Proton donor/acceptor role is filled by Lys-199.

It belongs to the DeoC/FbaB aldolase family. DeoC type 2 subfamily.

Its subcellular location is the cytoplasm. The catalysed reaction is 2-deoxy-D-ribose 5-phosphate = D-glyceraldehyde 3-phosphate + acetaldehyde. The protein operates within carbohydrate degradation; 2-deoxy-D-ribose 1-phosphate degradation; D-glyceraldehyde 3-phosphate and acetaldehyde from 2-deoxy-alpha-D-ribose 1-phosphate: step 2/2. In terms of biological role, catalyzes a reversible aldol reaction between acetaldehyde and D-glyceraldehyde 3-phosphate to generate 2-deoxy-D-ribose 5-phosphate. The protein is Deoxyribose-phosphate aldolase of Vibrio vulnificus (strain CMCP6).